The sequence spans 278 residues: uncharacterized protein (278 aa).

An N-terminal signal peptide occupies residues 1-32; the sequence is MSSASFTTKALSVLAALTAASAPLVAASPAHA. A Peptidase S1 domain is found at 33-236; sequence LANARNVTGS…HAEWIAYYTG (204 aa). Cysteine 59 and cysteine 75 are oxidised to a cystine. Active-site charge relay system residues include histidine 74, aspartate 123, and serine 189.

This sequence belongs to the peptidase S1 family.

It localises to the secreted. This is an uncharacterized protein from Corynebacterium glutamicum (strain R).